Here is a 1016-residue protein sequence, read N- to C-terminus: KN motif and ankyrin repeat domain-containing protein 4 (1016 aa).

6 disordered regions span residues 1 to 26, 70 to 91, 235 to 259, 401 to 485, 506 to 563, and 622 to 755; these read MEKI…YPYS, PRNF…QQNW, AEPE…AVQS, LSQE…LPRG, EEGS…SPQD, and AQAP…VSHL. Composition is skewed to polar residues over residues 70 to 80 and 246 to 258; these read PRNFSLPNSGD and SHLS…SAVQ. Positions 346 to 409 form a coiled coil; that stretch reads SSLKNQVLAL…KLSQERASEA (64 aa). Basic and acidic residues-rich tracts occupy residues 401-414 and 445-454; these read LSQE…DRTD and PECRAPRAEK. A compositionally biased stretch (polar residues) spans 460–469; the sequence is VQNNHKQSYP. Over residues 632–650 the composition is skewed to pro residues; the sequence is TPAPPPSTPPPPPPPPPEI. A Phosphothreonine modification is found at threonine 639. The segment covering 695 to 708 has biased composition (acidic residues); that stretch reads TSGEDSSPEDLSDS. Composition is skewed to basic and acidic residues over residues 709–727 and 745–755; these read ETEK…DLHP and TSDRGEEVSHL. 5 ANK repeats span residues 838 to 868, 877 to 905, 910 to 939, 943 to 973, and 977 to 1007; these read SGNT…NVDH, VMIT…NVNI, GGQT…DVNL, DGSS…NSSL, and AGRT…PGRS.

It is found in the cytoplasm. May be involved in the control of cytoskeleton formation by regulating actin polymerization. In Mus musculus (Mouse), this protein is KN motif and ankyrin repeat domain-containing protein 4 (Kank4).